Consider the following 214-residue polypeptide: Phosphatidylserine decarboxylase proenzyme (214 aa).

Catalysis depends on serine 183, which acts as the Schiff-base intermediate with substrate; via pyruvic acid. Pyruvic acid (Ser); by autocatalysis is present on serine 183.

The protein belongs to the phosphatidylserine decarboxylase family. PSD-A subfamily. In terms of assembly, heterodimer of a large membrane-associated beta subunit and a small pyruvoyl-containing alpha subunit. Pyruvate is required as a cofactor. Post-translationally, is synthesized initially as an inactive proenzyme. Formation of the active enzyme involves a self-maturation process in which the active site pyruvoyl group is generated from an internal serine residue via an autocatalytic post-translational modification. Two non-identical subunits are generated from the proenzyme in this reaction, and the pyruvate is formed at the N-terminus of the alpha chain, which is derived from the carboxyl end of the proenzyme. The post-translation cleavage follows an unusual pathway, termed non-hydrolytic serinolysis, in which the side chain hydroxyl group of the serine supplies its oxygen atom to form the C-terminus of the beta chain, while the remainder of the serine residue undergoes an oxidative deamination to produce ammonia and the pyruvoyl prosthetic group on the alpha chain.

It is found in the cell membrane. It catalyses the reaction a 1,2-diacyl-sn-glycero-3-phospho-L-serine + H(+) = a 1,2-diacyl-sn-glycero-3-phosphoethanolamine + CO2. It participates in phospholipid metabolism; phosphatidylethanolamine biosynthesis; phosphatidylethanolamine from CDP-diacylglycerol: step 2/2. Catalyzes the formation of phosphatidylethanolamine (PtdEtn) from phosphatidylserine (PtdSer). In Desulfotalea psychrophila (strain LSv54 / DSM 12343), this protein is Phosphatidylserine decarboxylase proenzyme.